We begin with the raw amino-acid sequence, 105 residues long: Small ribosomal subunit protein uS10 (105 aa).

This sequence belongs to the universal ribosomal protein uS10 family. Part of the 30S ribosomal subunit.

Its function is as follows. Involved in the binding of tRNA to the ribosomes. This is Small ribosomal subunit protein uS10 from Gloeothece citriformis (strain PCC 7424) (Cyanothece sp. (strain PCC 7424)).